A 208-amino-acid chain; its full sequence is Methyl-CpG-binding domain protein 3-like 2 (208 aa).

An interacts with MBD3 region spans residues Met-1 to Ala-89.

The protein belongs to the MBD3L family. As to quaternary structure, interacts (via N-terminus) with MBD3; the interaction is direct. Interacts with MTA1. Interacts with HDAC1. Interacts with HDAC2. Interacts with RBBP4. Interacts with RBBP7. Detected at low levels in several somatic tissues. Highly expressed in the ovarian teratocarcinoma cell line PA-1.

It is found in the nucleus. Its function is as follows. May displace the NuRD complex from chromatin. This is Methyl-CpG-binding domain protein 3-like 2 (MBD3L2) from Homo sapiens (Human).